The primary structure comprises 101 residues: MNSHFASAHTPFYINTKEGRYLVLKAVKVCDVRTVECEGSKASCVLKVDKPSSPACERRPSSPSRCERMNNPGKQVPFMRTDMLQNMFAANRDNVASRLLN.

The disordered stretch occupies residues 51 to 73 (PSSPACERRPSSPSRCERMNNPG). Phosphoserine is present on residues Ser-53 and Ser-62. Basic and acidic residues predominate over residues 56 to 68 (CERRPSSPSRCER).

The protein belongs to the orthopoxvirus OPG062 family. As to quaternary structure, self-associates to form high molecular-weight forms. Interacts with protein OPG157. Interacts with host RICTOR and RPTOR; these interactions disrupt the mTORC1 and mTORC2 crosstalk. Post-translationally, phosphorylated on two serines. While these phosphorylations do not play a role in virion assembly; they are essential for the interaction with host RICTOR and RPTOR.

The protein resides in the virion. Functionally, plays an essential role in virion assembly and morphogenesis. Also plays a role in the inhibition of host immune response by dysregulating mTOR. Sequesters host RICTOR and RPTOR, thereby disrupting mTORC1 and mTORC2 crosstalk. In turn, blocks the host antiviral response in part through mTOR-dependent degradation of cGAS, the primary poxvirus sensor. This is Phosphoprotein OPG062 (OPG062) from Homo sapiens (Human).